A 35-amino-acid polypeptide reads, in one-letter code: Mu-theraphotoxin-Hd1a (35 aa).

Cystine bridges form between C2–C17, C9–C24, and C16–C31.

This sequence belongs to the neurotoxin 10 (Hwtx-1) family. 22 (Htx-4) subfamily. In terms of tissue distribution, expressed by the venom gland.

The protein resides in the secreted. In terms of biological role, gating-modifier toxin that reversibly and voltage-independently inhibits human Nav1.1/SCN1A and Nav1.7/SCN9A (IC(50)=111 nM). It also shows moderate inhibition on Nav1.2/SCN2A (1 uM inhibits current by 55%), Nav1.6/SCN8A (31%), Nav1.3/SCN5A (27%) and Nav1.4/SCN4A (23%). This toxin inhibits Nav1.7/SCN9A by interacting with the S3b-S4 paddle motif in channel domain II. This chain is Mu-theraphotoxin-Hd1a, found in Cyriopagopus doriae (Tarantula spider).